A 244-amino-acid chain; its full sequence is Leucyl/phenylalanyl-tRNA--protein transferase (244 aa).

It belongs to the L/F-transferase family.

The protein resides in the cytoplasm. The enzyme catalyses N-terminal L-lysyl-[protein] + L-leucyl-tRNA(Leu) = N-terminal L-leucyl-L-lysyl-[protein] + tRNA(Leu) + H(+). It catalyses the reaction N-terminal L-arginyl-[protein] + L-leucyl-tRNA(Leu) = N-terminal L-leucyl-L-arginyl-[protein] + tRNA(Leu) + H(+). It carries out the reaction L-phenylalanyl-tRNA(Phe) + an N-terminal L-alpha-aminoacyl-[protein] = an N-terminal L-phenylalanyl-L-alpha-aminoacyl-[protein] + tRNA(Phe). In terms of biological role, functions in the N-end rule pathway of protein degradation where it conjugates Leu, Phe and, less efficiently, Met from aminoacyl-tRNAs to the N-termini of proteins containing an N-terminal arginine or lysine. The chain is Leucyl/phenylalanyl-tRNA--protein transferase from Janthinobacterium sp. (strain Marseille) (Minibacterium massiliensis).